The chain runs to 302 residues: 4-hydroxy-tetrahydrodipicolinate synthase (302 aa).

A pyruvate-binding site is contributed by T55. Catalysis depends on Y144, which acts as the Proton donor/acceptor. K172 (schiff-base intermediate with substrate) is an active-site residue. Position 214 (V214) interacts with pyruvate.

Belongs to the DapA family. Homotetramer; dimer of dimers.

The protein resides in the cytoplasm. The catalysed reaction is L-aspartate 4-semialdehyde + pyruvate = (2S,4S)-4-hydroxy-2,3,4,5-tetrahydrodipicolinate + H2O + H(+). Its pathway is amino-acid biosynthesis; L-lysine biosynthesis via DAP pathway; (S)-tetrahydrodipicolinate from L-aspartate: step 3/4. Functionally, catalyzes the condensation of (S)-aspartate-beta-semialdehyde [(S)-ASA] and pyruvate to 4-hydroxy-tetrahydrodipicolinate (HTPA). In Prochlorococcus marinus (strain MIT 9313), this protein is 4-hydroxy-tetrahydrodipicolinate synthase.